The following is a 231-amino-acid chain: Large ribosomal subunit protein uL1 (231 aa).

This sequence belongs to the universal ribosomal protein uL1 family. As to quaternary structure, part of the 50S ribosomal subunit.

Functionally, binds directly to 23S rRNA. The L1 stalk is quite mobile in the ribosome, and is involved in E site tRNA release. Its function is as follows. Protein L1 is also a translational repressor protein, it controls the translation of the L11 operon by binding to its mRNA. In Neisseria meningitidis serogroup C (strain 053442), this protein is Large ribosomal subunit protein uL1.